The following is a 462-amino-acid chain: Trigger factor (462 aa).

The PPIase FKBP-type domain occupies 163–248 (GDEVLFDFKG…LKEVRRVNSL (86 aa)). The tract at residues 442–462 (SMQEKQTQEPAEEKVETKEEK) is disordered. Basic and acidic residues predominate over residues 452–462 (AEEKVETKEEK).

This sequence belongs to the FKBP-type PPIase family. Tig subfamily.

The protein resides in the cytoplasm. The enzyme catalyses [protein]-peptidylproline (omega=180) = [protein]-peptidylproline (omega=0). In terms of biological role, involved in protein export. Acts as a chaperone by maintaining the newly synthesized protein in an open conformation. Functions as a peptidyl-prolyl cis-trans isomerase. This is Trigger factor from Mycoplasmopsis synoviae (strain 53) (Mycoplasma synoviae).